A 961-amino-acid polypeptide reads, in one-letter code: Outer capsid protein VP2 (961 aa).

It belongs to the orbivirus VP2 family.

It localises to the virion. In terms of biological role, the VP2 protein is one of the two proteins (with VP5) which constitute the virus particle outer capsid. It is the major target of the host immunogenic response. Responsible for viral attachment to target host cell, probably by binding to sialic acid. This attachment induces virion internalization predominantly through clathrin-dependent endocytosis. The protein is Outer capsid protein VP2 (Segment-2) of Antilocapra americana (Pronghorn).